A 354-amino-acid chain; its full sequence is tRNA-specific 2-thiouridylase MnmA (354 aa).

ATP contacts are provided by residues L6–S13 and L33. Residue C100 is the Nucleophile of the active site. Residues C100 and C195 are joined by a disulfide bond. An ATP-binding site is contributed by G123. The segment at K145 to Q147 is interaction with tRNA. The active-site Cysteine persulfide intermediate is the C195.

This sequence belongs to the MnmA/TRMU family.

The protein resides in the cytoplasm. It catalyses the reaction S-sulfanyl-L-cysteinyl-[protein] + uridine(34) in tRNA + AH2 + ATP = 2-thiouridine(34) in tRNA + L-cysteinyl-[protein] + A + AMP + diphosphate + H(+). Catalyzes the 2-thiolation of uridine at the wobble position (U34) of tRNA, leading to the formation of s(2)U34. The polypeptide is tRNA-specific 2-thiouridylase MnmA (Borrelia duttonii (strain Ly)).